The sequence spans 338 residues: uncharacterized protein (338 aa).

The next 6 membrane-spanning stretches (helical) occupy residues 13 to 33, 71 to 91, 110 to 130, 176 to 196, 218 to 238, and 301 to 321; these read PAYSHVLIAGGIGGATADFLM, GLYSGVCPMLIGSLPATALFF, TLCFLLAGFVGDLFASVVYVP, YGYRATILRDIPFSGFQLLFY, LITGSLAGAGAGFLTTPLDVA, and FRGFGPRIFWTSSQSSLMFVF. 3 Solcar repeats span residues 13–100, 108–202, and 216–328; these read PAYS…TKRH, PETL…LRQV, and RELI…IIRL.

This sequence belongs to the mitochondrial carrier (TC 2.A.29) family.

Its subcellular location is the mitochondrion inner membrane. Functionally, mitochondrial solute carriers shuttle metabolites, nucleotides, and cofactors through the mitochondrial inner membrane. This is an uncharacterized protein from Schizosaccharomyces pombe (strain 972 / ATCC 24843) (Fission yeast).